The following is an 86-amino-acid chain: Defensin-like protein 259 (86 aa).

Residues 1 to 25 (MKNASLKLPLLIFILVITSNLGAEA) form the signal peptide. Disulfide bonds link Cys60/Cys76, Cys66/Cys83, and Cys70/Cys85.

This sequence belongs to the DEFL family.

The protein resides in the secreted. This Arabidopsis thaliana (Mouse-ear cress) protein is Defensin-like protein 259.